Consider the following 72-residue polypeptide: Bradykinin-potentiating peptide BmKbpp (72 aa).

The N-terminal stretch at 1-22 (MNKKTLLVIFFVTMLIVDEVNS) is a signal peptide. A propeptide spanning residues 70–72 (RRR) is cleaved from the precursor.

The protein belongs to the non-disulfide-bridged peptide (NDBP) superfamily. Long chain multifunctional peptide (group 2) family. As to expression, expressed by the venom gland.

It localises to the secreted. Amphipathic peptide that shows bradykinin potentiating activity and antimicrobial activities against bacteria and fungi. Has higher antibacterial activities against Gram-negative than against Gram-positive bacteria. Also inhibits NADPH oxidase-dependent superoxide production (IC(50) is 0.4 uM on granulocytes stimulated with PMA, IC(50) is 0.51 uM on HL-60 cells undifferentiated and IC(50) is 0.53 uM on HL-60 cells treated with DMSO). The C-terminal peptide shows a higher bradykinin potentiating activity than the complete peptide. The polypeptide is Bradykinin-potentiating peptide BmKbpp (Olivierus martensii (Manchurian scorpion)).